The following is a 160-amino-acid chain: ATP synthase subunit delta, mitochondrial (160 aa).

The transit peptide at Met1–Tyr22 directs the protein to the mitochondrion.

The protein belongs to the ATPase epsilon chain family. In terms of assembly, F-type ATPases have 2 components, CF(1) - the catalytic core - and CF(0) - the membrane proton channel. CF(1) has five subunits: alpha(3), beta(3), gamma(1), delta(1), epsilon(1). CF(0) has three main subunits: a, b and c.

It localises to the mitochondrion. It is found in the mitochondrion inner membrane. Functionally, mitochondrial membrane ATP synthase (F(1)F(0) ATP synthase or Complex V) produces ATP from ADP in the presence of a proton gradient across the membrane which is generated by electron transport complexes of the respiratory chain. F-type ATPases consist of two structural domains, F(1) - containing the extramembraneous catalytic core, and F(0) - containing the membrane proton channel, linked together by a central stalk and a peripheral stalk. During catalysis, ATP turnover in the catalytic domain of F(1) is coupled via a rotary mechanism of the central stalk subunits to proton translocation. Part of the complex F(1) domain and of the central stalk which is part of the complex rotary element. Rotation of the central stalk against the surrounding alpha(3)beta(3) subunits leads to hydrolysis of ATP in three separate catalytic sites on the beta subunits. The chain is ATP synthase subunit delta, mitochondrial (ATP16) from Saccharomyces cerevisiae (strain ATCC 204508 / S288c) (Baker's yeast).